A 1598-amino-acid polypeptide reads, in one-letter code: Fatty acid synthase subunit alpha (1598 aa).

Positions 96-134 are disordered; the sequence is RTQPHKSSAPQEPVPKAAPKAAPPVPVATAPLPEPGRQV. Over residues 104–115 the composition is skewed to low complexity; the sequence is APQEPVPKAAPK. Residues 143-221 form the Carrier domain; the sequence is DVPIQSRDVI…QIVSGSTSTT (79 aa). At S181 the chain carries O-(pantetheine 4'-phosphoryl)serine. A ketoreductase (KR) domain region spans residues 543–784; it reads LKGKTVLLTG…LAALLVNPFA (242 aa). The tract at residues 818–844 is disordered; sequence KQDSTSTPTHQHLPSHHHVDEPEIGKP. A compositionally biased stretch (polar residues) spans 820 to 829; sequence DSTSTPTHQH. The region spanning 992 to 1524 is the Ketosynthase family 3 (KS3) domain; sequence HEIVLTRDLA…QKGAQAIIVH (533 aa). The active-site For beta-ketoacyl synthase activity is the C1175. The disordered stretch occupies residues 1280 to 1301; sequence ASDKTGRSVPSPGKGTLTNARE. Active-site for beta-ketoacyl synthase activity residues include H1409 and H1450.

Belongs to the thiolase-like superfamily. Fungal fatty acid synthetase subunit alpha family. As to quaternary structure, fatty acid synthase is composed of alpha and beta subunits.

The enzyme catalyses acetyl-CoA + n malonyl-CoA + 2n NADPH + 4n H(+) = a long-chain-acyl-CoA + n CoA + n CO2 + 2n NADP(+).. The catalysed reaction is a fatty acyl-[ACP] + malonyl-[ACP] + H(+) = a 3-oxoacyl-[ACP] + holo-[ACP] + CO2. It carries out the reaction a (3R)-hydroxyacyl-[ACP] + NADP(+) = a 3-oxoacyl-[ACP] + NADPH + H(+). The protein operates within mycotoxin biosynthesis. Functionally, fatty acid synthase subunit alpha; part of the gene cluster that mediates the biosynthesis of gramillins A and B, bicyclic lipopeptides that induce cell death in maize leaves but not in wheat leaves. The nonribosomal peptide synthetase GRA1 incorporates respectively a glutamic adic (Glu), a leucine (Leu), a serine (Ser), a hydroxyglutamine (HOGln), a 2-amino decanoic acid, and 2 cysteins (CysB and CysA). The biosynthesis of 2-amino decanoic acid incorporated in gramillins could be initiated by a fatty acid synthase composed of the alpha and beta subunits FGSG_00036 and FGSG_11656. The cytochrome P450 monooxygenase FGSG_15680 could hydroxylate the fatty acid chain. Subsequent oxidation to the ketone by the oxidoreductase FGSG_00048 and transamination by aminotransferase FGSG_00049 could form 2-amino-decanoic acid. On the other hand, FGSG_15680 could also be responsible for the HO-modified glutamine at the gamma-position. Whether hydroxylation occurs on the fully assembled product or on the Gln residue prior to assembly into the gramillins requires further proof. The thioredoxin FGSG_00043 could also be required for the disulfide-bond formation between CysA and CysB. The specific involvement of the remaining proteins from the cluster is more difficult to discern, but could have broader regulatory (FGSG_00040 and FGSG_11657) or enzymatic functions (FGSG_00044 and FGSG_00045). The final C-domain of GRA1 does not possess the expected sequence of a termination CT domain, often implicated in macrocyclization and release of a cyclopeptidein fungal NRPs; and the thioesterase FGSG_00047 may act in concert with the terminal C-domain of GRA1 to catalyze the formation of the macrocyclic anhydride and release of the products. In Gibberella zeae (strain ATCC MYA-4620 / CBS 123657 / FGSC 9075 / NRRL 31084 / PH-1) (Wheat head blight fungus), this protein is Fatty acid synthase subunit alpha.